We begin with the raw amino-acid sequence, 290 residues long: UPF0750 membrane protein YdeO (290 aa).

Transmembrane regions (helical) follow at residues 18-38 (IIMV…VLIP), 56-76 (LFNL…VWLG), 83-103 (SFAL…SFFH), 112-132 (DTLL…GLAL), and 165-185 (LFVF…LSVI).

This sequence belongs to the UPF0750 family.

Its subcellular location is the cell membrane. The protein is UPF0750 membrane protein YdeO (ydeO) of Bacillus subtilis (strain 168).